Consider the following 369-residue polypeptide: Glycine oxidase (369 aa).

FAD-binding positions include 14 to 15, 34 to 35, 42 to 43, 47 to 49, and Val-174; these read II, ES, TT, and AGM. Substrate-binding residues include Arg-302 and Arg-329. FAD is bound at residue 327–333; the sequence is HFRNGIL.

It belongs to the DAO family. ThiO subfamily. In terms of assembly, homotetramer. The cofactor is FAD.

The protein resides in the cytoplasm. The enzyme catalyses glycine + O2 + H2O = glyoxylate + H2O2 + NH4(+). The catalysed reaction is N-ethylglycine + O2 + H2O = ethylamine + glyoxylate + H2O2. It carries out the reaction sarcosine + O2 + H2O = methylamine + glyoxylate + H2O2. It catalyses the reaction D-alanine + O2 + H2O = pyruvate + H2O2 + NH4(+). The enzyme catalyses glyphosate + O2 + H2O = aminomethylphosphonate + glyoxylate + H2O2 + H(+). It functions in the pathway cofactor biosynthesis; thiamine diphosphate biosynthesis. With respect to regulation, is competitively inhibited by glycolate. Its function is as follows. Catalyzes the FAD-dependent oxidative deamination of various amines and D-amino acids to yield the corresponding alpha-keto acids, ammonia/amine, and hydrogen peroxide. Oxidizes sarcosine (N-methylglycine), N-ethylglycine and glycine. Can also oxidize the herbicide glyphosate (N-phosphonomethylglycine). Displays lower activities on D-alanine, D-valine, D-proline and D-methionine. Does not act on L-amino acids and other D-amino acids. Is essential for thiamine biosynthesis since the oxidation of glycine catalyzed by ThiO generates the glycine imine intermediate (dehydroglycine) required for the biosynthesis of the thiazole ring of thiamine pyrophosphate. This is Glycine oxidase from Bacillus subtilis (strain 168).